Reading from the N-terminus, the 423-residue chain is F-box/LRR-repeat protein 2 (423 aa).

An F-box domain is found at 9-55 (GRINKKLPKELLLRIFSFLDIVTLCRCAQISKAWNILALDGSNWQRI). LRR repeat units lie at residues 61–87 (QTDVEGRVVENISKRCGGFLRKLSLRG), 88–113 (CIGVGDSSLKTFAQNCRNIEHLNLNG), 114–139 (CTKITDSTCYSLSRFCSKLKHLDLTS), 140–165 (CVSITNSSLKGISEGCRNLEYLNLSW), 166–191 (CDQITKDGIEALVRGCRGLKALLLRG), 192–217 (CTQLEDEALKHIQNYCHELVSLNLQS), 218–243 (CSRITDEGVVQICRGCHRLQALCLSG), 244–269 (CSNLTDASLTALGLNCPRLQILEAAR), 270–295 (CSHLTDAGFTLLARNCHELEKMDLEE), 296–321 (CILITDSTLIQLSIHCPKLQALSLSH), 322–350 (CELITDDGILHLSNSTCGHERLRVLELDN), 351–375 (CLLITDVALEHLENCRGLERLELYD), and 376–401 (CQQVTRAGIKRMRAQLPHVKVHAYFA). Positions 80–90 (LRKLSLRGCIG) are interaction with Calmodulin. K201 participates in a covalent cross-link: Glycyl lysine isopeptide (Lys-Gly) (interchain with G-Cter in ubiquitin). The residue at position 404 (T404) is a Phosphothreonine. C420 carries S-geranylgeranyl cysteine lipidation. A CAAX motif motif is present at residues 420–423 (CVIL).

In terms of assembly, part of the SCF (SKP1-CUL1-F-box) E3 ubiquitin-protein ligase complex SCF(FBXL2) composed of CUL1, SKP1, RBX1 and FBXL2. Interacts with calmodulin; may antagonize substrate ubiquitination by SCF(FBXL2). May interact with PIK3R1. Interacts with PTPN13. In terms of processing, phosphorylated by GSK-beta (GSK3B), promoting recognition by FBXO3, leading to its ubiquitination by the SCF(FBXO3) complex. Ubiquitinated at Lys-201 by the SCF(FBXO3) complex in response to lipopolysaccharide (LPS), leading to its degradation by the proteasome.

The protein resides in the membrane. It participates in protein modification; protein ubiquitination. Calcium-activated substrate recognition component of the SCF (SKP1-cullin-F-box protein) E3 ubiquitin-protein ligase complex, SCF(FBXL2), which mediates the ubiquitination and subsequent proteasomal degradation of target proteins. Unlike many F-box proteins, FBXL2 does not seem to target phosphodegron within its substrates but rather calmodulin-binding motifs and is thereby antagonized by calmodulin. This is the case for the cyclins CCND2 and CCND3 which polyubiquitination and subsequent degradation are inhibited by calmodulin. Through CCND2 and CCND3 degradation induces cell-cycle arrest in G(0). SCF(FBXL2) also mediates PIK3R2 ubiquitination and proteasomal degradation thereby regulating phosphatidylinositol 3-kinase signaling and autophagy. PCYT1A monoubiquitination by SCF(FBXL2) and subsequent degradation regulates synthesis of phosphatidylcholine, which is utilized for formation of membranes and of pulmonary surfactant. The SCF(FBXL2) complex acts as a regulator of inflammation by mediating ubiquitination and degradation of TRAF proteins (TRAF1, TRAF2, TRAF3, TRAF4, TRAF5 and TRAF6). The SCF(FBXL2) complex acts as a negative regulator of the NLRP3 inflammasome by mediating ubiquitination and degradation of NLRP3. The chain is F-box/LRR-repeat protein 2 from Pongo abelii (Sumatran orangutan).